The sequence spans 197 residues: Putative methyltransferase Mtx subunit A (197 aa).

It belongs to the MtrA family. As to quaternary structure, may be part of a complex composed of 3 subunits; MtxA, MtxH and MtxX.

In Methanosarcina acetivorans (strain ATCC 35395 / DSM 2834 / JCM 12185 / C2A), this protein is Putative methyltransferase Mtx subunit A (mtxA).